We begin with the raw amino-acid sequence, 304 residues long: Phospholipase A1 (304 aa).

Cysteine 6 and cysteine 90 form a disulfide bridge. Asparagine 61 is a glycosylation site (N-linked (GlcNAc...) asparagine). The Nucleophile role is filled by serine 140. Residue aspartate 168 is the Charge relay system of the active site. 2 cysteine pairs are disulfide-bonded: cysteine 179–cysteine 184 and cysteine 222–cysteine 231. The active-site Charge relay system is the histidine 233. 3 disulfides stabilise this stretch: cysteine 248–cysteine 272, cysteine 249–cysteine 297, and cysteine 265–cysteine 270.

The protein belongs to the AB hydrolase superfamily. Lipase family. As to expression, expressed by the venom gland.

It is found in the secreted. It catalyses the reaction a 1,2-diacyl-sn-glycero-3-phosphocholine + H2O = a 2-acyl-sn-glycero-3-phosphocholine + a fatty acid + H(+). Its function is as follows. Catalyzes the hydrolysis of phosphatidylcholine with phospholipase A1 activity. May act as an allergen and induce hemolytic activity. The protein is Phospholipase A1 of Vespa velutina (Asian yellow-legged hornet).